A 122-amino-acid chain; its full sequence is MARIAGVNIPTAKRVPIALTYITGIGNTSAKQICEAVGIDPSRRVNELSDAEVLAVREHIDANYTVEGDLRREVQMNVKRLMDLGCYRGLRHRRNLPVRGQRTHTNARTRKGPAKAIAGKKK.

The interval 98 to 122 is disordered; that stretch reads VRGQRTHTNARTRKGPAKAIAGKKK.

The protein belongs to the universal ribosomal protein uS13 family. Part of the 30S ribosomal subunit. Forms a loose heterodimer with protein S19. Forms two bridges to the 50S subunit in the 70S ribosome.

Functionally, located at the top of the head of the 30S subunit, it contacts several helices of the 16S rRNA. In the 70S ribosome it contacts the 23S rRNA (bridge B1a) and protein L5 of the 50S subunit (bridge B1b), connecting the 2 subunits; these bridges are implicated in subunit movement. Contacts the tRNAs in the A and P-sites. The polypeptide is Small ribosomal subunit protein uS13 (Roseobacter denitrificans (strain ATCC 33942 / OCh 114) (Erythrobacter sp. (strain OCh 114))).